The chain runs to 358 residues: MAGAVSLWRREAVFLTAMLAGETSIVGLSTLFKVATSKGLNIYPFLSYSYLLASLLLLPSLFFTNRSRSLPPLSASILSKIGLLGFLGSMYVITGGIGIEYSNPTLASAIGNIVPALTFILAVIFRMEKVSFKERSSVAKVMGTILSLIGAFVVIFYHGPRVFVASSPPYLNFRQLSPPLSSSKSDWLIGGAILTIQGIFVSVSFILQTHIMREYPEAFTVSILYILCISIVTSMIGLVVEKNNPSIWIIHFDITLFTIVTTGIITSVYYVIHSWAIRHKRPLYLAIFKPLSILIAVVMGTIFLNDSLYLGCLIGGILITLGFYVVMWGKANEEKNKLLSFSGKEKTPLLLSGKNDQI.

The next 10 helical transmembrane spans lie at 12–32 (AVFL…STLF), 42–62 (IYPF…PSLF), 81–101 (IGLL…GIEY), 105–125 (TLAS…AVIF), 137–157 (SVAK…VIFY), 187–207 (WLIG…SFIL), 219–239 (FTVS…IGLV), 245–265 (PSIW…TGII), 283–303 (LYLA…GTIF), and 308–328 (LYLG…VVMW). One can recognise an EamA domain in the interval 27–155 (GLSTLFKVAT…LSLIGAFVVI (129 aa)).

It belongs to the drug/metabolite transporter (DMT) superfamily. Plant drug/metabolite exporter (P-DME) (TC 2.A.7.4) family.

The protein resides in the membrane. The chain is WAT1-related protein At3g28080 from Arabidopsis thaliana (Mouse-ear cress).